Reading from the N-terminus, the 136-residue chain is Small ribosomal subunit protein uS9 (136 aa).

The disordered stretch occupies residues 96 to 136 (LSPDNRKPLKTEGHLSRDPRAKERRKYGLKKARKAPQFSKR). Positions 98–116 (PDNRKPLKTEGHLSRDPRA) are enriched in basic and acidic residues. The span at 117–136 (KERRKYGLKKARKAPQFSKR) shows a compositional bias: basic residues.

It belongs to the universal ribosomal protein uS9 family.

In Prochlorococcus marinus (strain MIT 9515), this protein is Small ribosomal subunit protein uS9.